The chain runs to 736 residues: Segment polarity protein dishevelled homolog DVL-2 (736 aa).

Positions 11–93 (VGETKVIYHL…RVVSWLVSSD (83 aa)) constitute a DIX domain. Residues 93-255 (DTPQPEVAPP…RMERTSSFSS (163 aa)) form a disordered region. The span at 111–122 (VPPPPPLPPLPP) shows a compositional bias: pro residues. The segment covering 159–171 (LRRDRPRRRDSSE) has biased composition (basic and acidic residues). The segment covering 193-208 (ESSSTLMTSELESTSL) has biased composition (low complexity). Phosphoserine is present on S211. Over residues 218–230 (SRFSSSTEQSSAS) the composition is skewed to polar residues. The span at 232–244 (LLKRHRRRRKQRP) shows a compositional bias: basic residues. The PDZ domain maps to 267-339 (TVTLNMEKYN…NDDAVRVLRD (73 aa)). The DEP domain occupies 433–507 (PESGLEVRDR…SEQCYYVFGD (75 aa)). Over residues 558–568 (PHPYSPQPPPY) the composition is skewed to pro residues. A disordered region spans residues 558–665 (PHPYSPQPPP…PNLRALPGLH (108 aa)). Composition is skewed to low complexity over residues 581-598 (ASSQ…TRSD) and 614-629 (SKSG…SRGG).

It belongs to the DSH family. As to quaternary structure, interacts through its PDZ domain with the C-terminal regions of VANGL1 and VANGL2. Interacts with Rac. Interacts with ARRB1; the interaction is enhanced by phosphorylation of DVL1. Can form large oligomers (via DIX domain). Interacts (via DIX domain) with DIXDC1 (via DIX domain). Interacts (via DEP domain) with AP2M1 and the AP-2 complex. Interacts with FAM105B/otulin. Interacts with DCDC2. Interacts (when phosphorylated) with FOXK1 and FOXK2; the interaction induces DVL2 nuclear translocation. Interacts with MAPK15. Interacts with PKD1 (via extracellular domain). Interacts with LMBR1L. In terms of processing, phosphorylated by CSNK1D. WNT3A induces DVL2 phosphorylation by CSNK1E and MARK kinases. Post-translationally, ubiquitinated via 'Lys-63'-linked polyubiquitin chains; leading to its autophagy-mediated degradation. As to expression, ubiquitous.

Its subcellular location is the cell membrane. It is found in the cytoplasm. It localises to the cytosol. The protein localises to the cytoplasmic vesicle. The protein resides in the nucleus. Plays a role in the signal transduction pathways mediated by multiple Wnt genes. Participates both in canonical and non-canonical Wnt signaling by binding to the cytoplasmic C-terminus of frizzled family members and transducing the Wnt signal to down-stream effectors. Promotes internalization and degradation of frizzled proteins upon Wnt signaling. This Mus musculus (Mouse) protein is Segment polarity protein dishevelled homolog DVL-2 (Dvl2).